Here is a 412-residue protein sequence, read N- to C-terminus: Argininosuccinate synthase (412 aa).

ATP is bound by residues A10–S18 and A36. 2 residues coordinate L-citrulline: Y87 and S92. Residue Y87 is modified to Phosphotyrosine. The residue at position 112 (K112) is an N6-acetyllysine. Y113 is modified (phosphotyrosine). ATP is bound at residue S115–N123. Residues T119, N123, and D124 each coordinate L-aspartate. N123 contacts L-citrulline. Residue R127 coordinates L-citrulline. N6-acetyllysine; by CLOCK occurs at positions 165 and 176. Residues S180 and S189 each contribute to the L-citrulline site. Phosphoserine is present on S180. T219 is modified (phosphothreonine). E270 and Y282 together coordinate L-citrulline.

This sequence belongs to the argininosuccinate synthase family. Type 1 subfamily. Homotetramer. Interacts with NMRAL1. Interacts with CLOCK; in a circadian manner. Forms tissue-specific complexes with ASL, SLC7A1, HSP90AA1 and nitric oxide synthase NOS1, NOS2 or NOS3; the complex regulates cell-autonomous L-arginine synthesis and citrulline recycling while channeling extracellular L-arginine to nitric oxide synthesis pathway. Post-translationally, acetylated by CLOCK in a circadian manner which negatively regulates its enzyme activity. Deacetylated by histone deacetylases. As to expression, expressed in adult liver.

It localises to the cytoplasm. Its subcellular location is the cytosol. It carries out the reaction L-citrulline + L-aspartate + ATP = 2-(N(omega)-L-arginino)succinate + AMP + diphosphate + H(+). Its pathway is amino-acid biosynthesis; L-arginine biosynthesis; L-arginine from L-ornithine and carbamoyl phosphate: step 2/3. The protein operates within nitrogen metabolism; urea cycle; (N(omega)-L-arginino)succinate from L-aspartate and L-citrulline: step 1/1. In terms of biological role, one of the enzymes of the urea cycle, the metabolic pathway transforming neurotoxic amonia produced by protein catabolism into inocuous urea in the liver of ureotelic animals. Catalyzes the formation of arginosuccinate from aspartate, citrulline and ATP and together with ASL it is responsible for the biosynthesis of arginine in most body tissues. The sequence is that of Argininosuccinate synthase from Homo sapiens (Human).